The chain runs to 1120 residues: Transcription-repair-coupling factor (1120 aa).

One can recognise a Helicase ATP-binding domain in the interval 591–756 (DLTNGMLMDR…LTGLKELSII (166 aa)). ATP is bound at residue 604-611 (GDVGFGKT). The DEEQ box motif lies at 709 to 712 (DEEQ). One can recognise a Helicase C-terminal domain in the interval 777 to 933 (IIRDALLREH…TIASHDADLR (157 aa)).

In the N-terminal section; belongs to the UvrB family. It in the C-terminal section; belongs to the helicase family. RecG subfamily.

The protein resides in the cytoplasm. Couples transcription and DNA repair by recognizing RNA polymerase (RNAP) stalled at DNA lesions. Mediates ATP-dependent release of RNAP and its truncated transcript from the DNA, and recruitment of nucleotide excision repair machinery to the damaged site. The polypeptide is Transcription-repair-coupling factor (Rickettsia typhi (strain ATCC VR-144 / Wilmington)).